A 237-amino-acid chain; its full sequence is B3 domain-containing protein Os06g0194400 (237 aa).

Disordered stretches follow at residues Met1–Glu23 and Ser38–Lys82. The TF-B3 DNA-binding region spans Phe139–Ser230.

The protein localises to the nucleus. This Oryza sativa subsp. japonica (Rice) protein is B3 domain-containing protein Os06g0194400.